A 1806-amino-acid polypeptide reads, in one-letter code: MQLSRAAAAAAAAPAEPPEPLSPAPAPAPAPPGPLPRSAADGAPAGGKGGPGRRAESPGAPFPGASGPGPGPGAGMDGPGASAVVVRVGIPDLQQTKCLRLDPAAPVWAAKQRVLCALNHSLQDALNYGLFQPPSRGRAGKFLDEERLLQEYPPNLDTPLPYLEFRYKRRVYAQNLIDDKQFAKLHTKANLKKFMDYVQLHSTDKVARLLDKGLDPNFHDPDSGECPLSLAAQLDNATDLLKVLKNGGAHLDFRTRDGLTAVHCATRQRNAAALTTLLDLGASPDYKDSRGLTPLYHSALGGGDALCCELLLHDHAQLGITDENGWQEIHQACRFGHVQHLEHLLFYGADMGAQNASGNTALHICALYNQESCARVLLFRGANRDVRNYNSQTAFQVAIIAGNFELAEVIKTHKDSDVVPFRETPSYAKRRRLAGPSGLASPRPLQRSASDINLKGEAQPAASPGPSLRSLPHQLLLQRLQEEKDRDRDADQESNISGPLAGRAGQSKISPSGPGGPGPAPGPGPAPPAPPAPPPRGPKRKLYSAVPGRKFIAVKAHSPQGEGEIPLHRGEAVKVLSIGEGGFWEGTVKGRTGWFPADCVEEVQMRQHDTRPETREDRTKRLFRHYTVGSYDSLTSHSDYVIDDKVAVLQKRDHEGFGFVLRGAKAETPIEEFTPTPAFPALQYLESVDVEGVAWRAGLRTGDFLIEVNGVNVVKVGHKQVVALIRQGGNRLVMKVVSVTRKPEEDGARRRAPPPPKRAPSTTLTLRSKSMTAELEELASIRRRKGEKLDEMLAAAAEPTLRPDIADADSRAATVKQRPTSRRITPAEISSLFERQGLPGPEKLPGSLRKGIPRTKSVGEDEKLASLLEGRFPRSTSMQDPVREGRGIPPPPQTAPPPPPAPYYFDSGPPPAFSPPPPPGRAYDTVRSSFKPGLEARLGAGAAGLYEPGAALGPLPYPERQKRARSMIILQDSAPESGDAPRPPPAATPPERPKRRPRPPGPDSPYANLGAFSASLFAPSKPQRRKSPLVKQLQVEDAQERAALAVGSPGPGGGSFAREPSPTHRGPRPGGLDYGAGDGPGLAFGGPGPAKDRRLEERRRSTVFLSVGAIEGSAPGADLPSLQPSRSIDERLLGTGPTAGRDLLLPSPVSALKPLVSGPSLGPSGSTFIHPLTGKPLDPSSPLALALAARERALASQAPSRSPTPVHSPDADRPGPLFVDVQARDPERGSLASPAFSPRSPAWIPVPARREAEKVPREERKSPEDKKSMILSVLDTSLQRPAGLIVVHATSNGQEPSRLGGAEEERPGTPELAPAPMQSAAVAEPLPSPRAQPPGGTPADAGPGQGSSEEEPELVFAVNLPPAQLSSSDEETREELARIGLVPPPEEFANGVLLATPLAGPGPSPTTVPSPASGKPSSEPPPAPESAADSGVEEADTRSSSDPHLETTSTISTVSSMSTLSSESGELTDTHTSFADGHTFLLEKPPVPPKPKLKSPLGKGPVTFRDPLLKQSSDSELMAQQHHAASAGLASAAGPARPRYLFQRRSKLWGDPVESRGLPGPEDDKPTVISELSSRLQQLNKDTRSLGEEPVGGLGSLLDPAKKSPIAAARLFSSLGELSSISAQRSPGGPGGGASYSVRPSGRYPVARRAPSPVKPASLERVEGLGAGAGGAGRPFGLTPPTILKSSSLSIPHEPKEVRFVVRSVSARSRSPSPSPLPSPASGPGPGAPGPRRPFQQKPLQLWSKFDVGDWLESIHLGEHRDRFEDHEIEGAHLPALTKDDFVELGVTRVGHRMNIERALRQLDGS.

Positions 76-150 are intramolecular interaction with the ANK repeats; the sequence is MDGPGASAVV…KFLDEERLLQ (75 aa). Tyr197 bears the Phosphotyrosine mark. 6 ANK repeats span residues 223-253, 257-286, 290-320, 324-353, 357-386, and 390-420; these read SGEC…HLDF, DGLT…SPDY, RGLT…QLGI, NGWQ…DMGA, SGNT…NRDV, and NSQT…DVVP. Residues 407–416 show a composition bias toward basic and acidic residues; it reads AEVIKTHKDS. The interval 407-467 is disordered; sequence AEVIKTHKDS…AQPAASPGPS (61 aa). Residues 439–461 show a composition bias toward pro residues; sequence LASPRPLQRSASDINLKGEAQPA. Phosphoserine is present on residues Ser448, Ser450, Ser463, Ser470, and Ser558. In terms of domain architecture, SH3 spans 546-605; that stretch reads VPGRKFIAVKAHSPQGEGEIPLHRGEAVKVLSIGEGGFWEGTVKGRTGWFPADCVEEVQM. Tyr631 bears the Phosphotyrosine mark. The PDZ domain occupies 646 to 740; it reads VAVLQKRDHE…RLVMKVVSVT (95 aa). Disordered stretches follow at residues 665 to 689 and 760 to 853; these read KAET…ESVD and PSTT…KGIP. A required for interaction with ABI1 region spans residues 753–760; the sequence is PPPPKRAP. Ser770 is modified (phosphoserine). Over residues 813-845 the composition is skewed to pro residues; it reads ATVKQRPTSRRITPAEISSLFERQGLPGPEKLP. A phosphoserine mark is found at Ser857, Ser866, and Ser877. Positions 871 to 1021 are disordered; sequence RFPRSTSMQD…FSASLFAPSK (151 aa). The segment covering 906 to 915 has biased composition (pro residues); that stretch reads DSGPPPAFSP. 2 positions are modified to phosphoserine: Ser966 and Ser973. Thr988 carries the post-translational modification Phosphothreonine. A compositionally biased stretch (gly residues) spans 993–1013; it reads PKRRPRPPGPDSPYANLGAFS. Tyr1006 carries the post-translational modification Phosphotyrosine. The residue at position 1041 (Arg1041) is an Asymmetric dimethylarginine. Residues 1115-1124 are compositionally biased toward low complexity; it reads PGADLPSLQP. 3 disordered regions span residues 1115 to 1460, 1475 to 1525, and 1546 to 1584; these read PGAD…MSTL, ADGH…HHAA, and SKLW…KDTR. A compositionally biased stretch (basic and acidic residues) spans 1173–1193; that stretch reads TGKPLDPSSPLALALAARERA. A Phosphothreonine modification is found at Thr1204. Ser1208, Ser1233, Ser1237, and Ser1240 each carry phosphoserine. Over residues 1251–1261 the composition is skewed to pro residues; that stretch reads EAEKVPREERK. Thr1309 carries the phosphothreonine modification. Position 1328 is a phosphoserine (Ser1328). Over residues 1360–1370 the composition is skewed to basic and acidic residues; that stretch reads LPPAQLSSSDE. 2 stretches are compositionally biased toward low complexity: residues 1371–1392 and 1444–1460; these read ETRE…ANGV and HLET…MSTL. Residues 1485 to 1491 carry the SH3-binding motif; sequence PPVPPKP. Ser1495 is subject to Phosphoserine. The span at 1495-1505 shows a compositional bias: polar residues; the sequence is SPLGKGPVTFR. The stretch at 1569-1589 forms a coiled coil; sequence ISELSSRLQQLNKDTRSLGEE. 4 positions are modified to phosphoserine: Ser1585, Ser1596, Ser1604, and Ser1614. The segment covering 1627–1637 has biased composition (low complexity); that stretch reads PGGPGGGASYS. Positions 1627–1664 are disordered; the sequence is PGGPGGGASYSVRPSGRYPVARRAPSPVKPASLERVEG. Positions 1638–1657 are enriched in pro residues; that stretch reads VRPSGRYPVARRAPSPVKPA. Phosphoserine is present on residues Ser1709, Ser1711, and Ser1713. In terms of domain architecture, SAM spans 1743 to 1806; that stretch reads WSKFDVGDWL…ERALRQLDGS (64 aa).

As to quaternary structure, may homomultimerize via its SAM domain. Interacts with BAIAP2, DBNL and SLC17A7/VGLUT1. Interacts with DLGAP1/GKAP, GRM1/MGLUR1, GRM5/MGLUR5 and LZTS3 C-termini via its PDZ domain. Interacts with ABI1, HOMER1, HOMER2, HOMER3 and CTTN/cortactin SH3 domain. Is part of a complex with DLG4/PSD-95 and DLGAP1/GKAP. Interacts (via PDZ domain) with the GRIA1 subunit of the AMPA receptor (via PDZ-binding motif). Interacts with WASF1 and CYFIP2; the interactions mediate the association of SHANK3 with the WAVE1 complex. Interacts with ARPC2; the interaction probably mediates the association of SHANK3 with the Arp2/3 complex. Interacts (via ANK repeats) with SHARPIN and SPTAN1. Interacts (via PDZ domain) with ARHGAP44 (probably via PDZ-binding motif); the interaction takes place in dendritic spines and promotes GRIA1 exocytosis. Interacts with CAMK2A. Interacts with DIP2A. Interacts with ADGRL3. In terms of tissue distribution, expressed in the cerebral cortex and the cerebellum.

The protein localises to the cytoplasm. The protein resides in the postsynaptic density. Its subcellular location is the cell projection. It is found in the dendritic spine. Major scaffold postsynaptic density protein which interacts with multiple proteins and complexes to orchestrate the dendritic spine and synapse formation, maturation and maintenance. Interconnects receptors of the postsynaptic membrane including NMDA-type and metabotropic glutamate receptors via complexes with GKAP/PSD-95 and HOMER, respectively, and the actin-based cytoskeleton. Plays a role in the structural and functional organization of the dendritic spine and synaptic junction through the interaction with Arp2/3 and WAVE1 complex as well as the promotion of the F-actin clusters. By way of this control of actin dynamics, participates in the regulation of developing neurons growth cone motility and the NMDA receptor-signaling. Also modulates GRIA1 exocytosis and GRM5/MGLUR5 expression and signaling to control the AMPA and metabotropic glutamate receptor-mediated synaptic transmission and plasticity. May be required at an early stage of synapse formation and be inhibited by IGF1 to promote synapse maturation. The sequence is that of SH3 and multiple ankyrin repeat domains protein 3 (SHANK3) from Homo sapiens (Human).